Here is a 433-residue protein sequence, read N- to C-terminus: MSTKNEQLFAQACKHIPGGVNSPVRAFAGVGGTPIFMHRANGSKIYDTEDNAYIDYVGSWGPMILGHAHPKVIDAVKKAADDGLSFGTPTPFETTVADKICEIVPSVEMIRMTSSGTEATMSAIRLARGYTQRDKIVKFEGCYHGHSDSLLVKAGSGMLDIGEPTSKGVPADFAKHTITIPYNDSQAIKDCFEKWGEEIACVILEPIAGNMNMVIPSQEFHDTLREQCTANNSVLIFDEVMTGFRVGLGGAQAHFGIDPDLTCFGKIIGAGLPVGAFGGKKEVMSCIAPLGGVYQAGTLSGNPLAMRAGIAMFEDLTAEGFYDELAVKVDRLVDGFQAAADKHGINLRTNKLGGMFGMFFVTDGDTAVPQNFDEVTECDMEVFNTFFHGMLDRGIYLAPSAYEAGFMSIKHSDEDIDTSIKAADEIFAEMAKA.

At K266 the chain carries N6-(pyridoxal phosphate)lysine.

Belongs to the class-III pyridoxal-phosphate-dependent aminotransferase family. HemL subfamily. In terms of assembly, homodimer. The cofactor is pyridoxal 5'-phosphate.

The protein resides in the cytoplasm. The enzyme catalyses (S)-4-amino-5-oxopentanoate = 5-aminolevulinate. It functions in the pathway porphyrin-containing compound metabolism; protoporphyrin-IX biosynthesis; 5-aminolevulinate from L-glutamyl-tRNA(Glu): step 2/2. The protein is Glutamate-1-semialdehyde 2,1-aminomutase of Psychrobacter arcticus (strain DSM 17307 / VKM B-2377 / 273-4).